Reading from the N-terminus, the 178-residue chain is Crossover junction endodeoxyribonuclease RuvC (178 aa).

Active-site residues include Asp8, Glu72, and Asp144. Mg(2+)-binding residues include Asp8, Glu72, and Asp144.

Belongs to the RuvC family. As to quaternary structure, homodimer which binds Holliday junction (HJ) DNA. The HJ becomes 2-fold symmetrical on binding to RuvC with unstacked arms; it has a different conformation from HJ DNA in complex with RuvA. In the full resolvosome a probable DNA-RuvA(4)-RuvB(12)-RuvC(2) complex forms which resolves the HJ. It depends on Mg(2+) as a cofactor.

The protein localises to the cytoplasm. It carries out the reaction Endonucleolytic cleavage at a junction such as a reciprocal single-stranded crossover between two homologous DNA duplexes (Holliday junction).. The RuvA-RuvB-RuvC complex processes Holliday junction (HJ) DNA during genetic recombination and DNA repair. Endonuclease that resolves HJ intermediates. Cleaves cruciform DNA by making single-stranded nicks across the HJ at symmetrical positions within the homologous arms, yielding a 5'-phosphate and a 3'-hydroxyl group; requires a central core of homology in the junction. The consensus cleavage sequence is 5'-(A/T)TT(C/G)-3'. Cleavage occurs on the 3'-side of the TT dinucleotide at the point of strand exchange. HJ branch migration catalyzed by RuvA-RuvB allows RuvC to scan DNA until it finds its consensus sequence, where it cleaves and resolves the cruciform DNA. This Idiomarina loihiensis (strain ATCC BAA-735 / DSM 15497 / L2-TR) protein is Crossover junction endodeoxyribonuclease RuvC.